The following is a 227-amino-acid chain: Enolase-phosphatase E1 (227 aa).

The protein belongs to the HAD-like hydrolase superfamily. MasA/MtnC family. In terms of assembly, monomer. The cofactor is Mg(2+).

The catalysed reaction is 5-methylsulfanyl-2,3-dioxopentyl phosphate + H2O = 1,2-dihydroxy-5-(methylsulfanyl)pent-1-en-3-one + phosphate. The protein operates within amino-acid biosynthesis; L-methionine biosynthesis via salvage pathway; L-methionine from S-methyl-5-thio-alpha-D-ribose 1-phosphate: step 3/6. It participates in amino-acid biosynthesis; L-methionine biosynthesis via salvage pathway; L-methionine from S-methyl-5-thio-alpha-D-ribose 1-phosphate: step 4/6. Functionally, bifunctional enzyme that catalyzes the enolization of 2,3-diketo-5-methylthiopentyl-1-phosphate (DK-MTP-1-P) into the intermediate 2-hydroxy-3-keto-5-methylthiopentenyl-1-phosphate (HK-MTPenyl-1-P), which is then dephosphorylated to form the acireductone 1,2-dihydroxy-3-keto-5-methylthiopentene (DHK-MTPene). This Pseudomonas fluorescens (strain Pf0-1) protein is Enolase-phosphatase E1.